The sequence spans 1296 residues: DNA-directed RNA polymerase subunit beta' (1296 aa).

Cys60, Cys62, Cys75, and Cys78 together coordinate Zn(2+). Mg(2+) contacts are provided by Asp535, Asp537, and Asp539. Zn(2+) is bound by residues Cys877, Cys954, Cys961, and Cys964.

The protein belongs to the RNA polymerase beta' chain family. The RNAP catalytic core consists of 2 alpha, 1 beta, 1 beta' and 1 omega subunit. When a sigma factor is associated with the core the holoenzyme is formed, which can initiate transcription. Mg(2+) serves as cofactor. Requires Zn(2+) as cofactor.

It catalyses the reaction RNA(n) + a ribonucleoside 5'-triphosphate = RNA(n+1) + diphosphate. DNA-dependent RNA polymerase catalyzes the transcription of DNA into RNA using the four ribonucleoside triphosphates as substrates. In Beutenbergia cavernae (strain ATCC BAA-8 / DSM 12333 / CCUG 43141 / JCM 11478 / NBRC 16432 / NCIMB 13614 / HKI 0122), this protein is DNA-directed RNA polymerase subunit beta'.